Here is a 195-residue protein sequence, read N- to C-terminus: Rac-like GTP-binding protein ARAC4 (195 aa).

GTP-binding positions include 12–19 (GDGAVGKT), 30–37 (FPTDYVPT), 59–63 (DTAGQ), and 117–120 (TKLD). Residues 34–42 (YVPTVFDNF) carry the Effector region motif. Cysteine 192 carries the cysteine methyl ester modification. Cysteine 192 carries the S-geranylgeranyl cysteine lipid modification. Positions 193–195 (AFL) are cleaved as a propeptide — removed in mature form.

It belongs to the small GTPase superfamily. Rho family. As to quaternary structure, interacts with SPK1, ICR1, ICR5 and PIR. As to expression, ubiquitous.

It is found in the cytoplasm. The protein localises to the cell membrane. Its function is as follows. Inactive GDP-bound Rho GTPases reside in the cytosol, are found in a complex with Rho GDP-dissociation inhibitors (Rho GDIs), and are released from the GDI protein in order to translocate to membranes upon activation. Involved in cell polarity control during the actin-dependent tip growth of root hairs, thus regulating root hair length and root hair initiation. Contributes, in a SPK1-dependent manner, to the prevention of cortical microtubules organization into parallel arrays oriented perpendicular to the axis of cell elongation to limit anisotropic cell growth during petal development. May regulate a WAVE complex that activates the Arp2/3 complex. This Arabidopsis thaliana (Mouse-ear cress) protein is Rac-like GTP-binding protein ARAC4.